A 236-amino-acid polypeptide reads, in one-letter code: uncharacterized protein (236 aa).

The protein belongs to the HyuE racemase family.

It is found in the cytoplasm. This is an uncharacterized protein from Schizosaccharomyces pombe (strain 972 / ATCC 24843) (Fission yeast).